Reading from the N-terminus, the 220-residue chain is Grancalcin (220 aa).

EF-hand domains follow at residues 51–86 (SPADDSMWTYFTAVAGQDGEVDAEELQRCLTQSGIS), 92–127 (FSLETCRIMIAMLDRDYTGKMGFNEFKELWAALNAW), 122–157 (AALNAWKQNFMTIDQDQSGTVEHHELSQAIALMGYR), and 158–193 (LSPQTLAAIVRRYSKNGRIFFDDYVACCVKLRALTD). The Ca(2+) site is built by Asp-105, Asp-107, Thr-109, Lys-111, Glu-116, Asp-135, Asp-137, Ser-139, Thr-141, and Glu-146.

As to quaternary structure, homodimer. Interacts with SRI and LCP1.

Its subcellular location is the cytoplasm. The protein localises to the cytoplasmic granule membrane. Its function is as follows. Calcium-binding protein that may play a role in the adhesion of neutrophils to fibronectin. May play a role in the formation of focal adhesions. In Mus musculus (Mouse), this protein is Grancalcin (Gca).